A 177-amino-acid polypeptide reads, in one-letter code: MSDLTTIARPYAKAAFDFAVDKGQLDQWGQMLSFAAEVAKNEQMNELLTSSFSAEKMAEIFVAVCGEQVDAHGQNLLKVMAENGRLAALPDVCEQFFILKKEHEKEIDVEVISASELSDEQLANIGSKLEARLERKVKLNCSVDETLLGGVIIRAGDLVIDDSARGRLNRLSDALQS.

This sequence belongs to the ATPase delta chain family. In terms of assembly, F-type ATPases have 2 components, F(1) - the catalytic core - and F(0) - the membrane proton channel. F(1) has five subunits: alpha(3), beta(3), gamma(1), delta(1), epsilon(1). F(0) has three main subunits: a(1), b(2) and c(10-14). The alpha and beta chains form an alternating ring which encloses part of the gamma chain. F(1) is attached to F(0) by a central stalk formed by the gamma and epsilon chains, while a peripheral stalk is formed by the delta and b chains.

It is found in the cell inner membrane. Its function is as follows. F(1)F(0) ATP synthase produces ATP from ADP in the presence of a proton or sodium gradient. F-type ATPases consist of two structural domains, F(1) containing the extramembraneous catalytic core and F(0) containing the membrane proton channel, linked together by a central stalk and a peripheral stalk. During catalysis, ATP synthesis in the catalytic domain of F(1) is coupled via a rotary mechanism of the central stalk subunits to proton translocation. In terms of biological role, this protein is part of the stalk that links CF(0) to CF(1). It either transmits conformational changes from CF(0) to CF(1) or is implicated in proton conduction. The chain is ATP synthase subunit delta from Vibrio parahaemolyticus serotype O3:K6 (strain RIMD 2210633).